Consider the following 57-residue polypeptide: uncharacterized protein (57 aa).

The interval 31 to 57 (HHQTSSFNPMPSEVSLHTSHNFPHTTF) is disordered. Residues 33-57 (QTSSFNPMPSEVSLHTSHNFPHTTF) are compositionally biased toward polar residues.

This is an uncharacterized protein from Invertebrate iridescent virus 6 (IIV-6).